Reading from the N-terminus, the 362-residue chain is Carbamoyl phosphate synthase pyrimidine-specific small chain (362 aa).

The CPSase stretch occupies residues 1–168; it reads MKRQLILEDG…TRDPYHVPGP (168 aa). Residues Ser45, Gly219, and Gly221 each coordinate L-glutamine. Positions 171–358 constitute a Glutamine amidotransferase type-1 domain; it reads RVVLVDYGMK…IKLMESNKHR (188 aa). Catalysis depends on Cys246, which acts as the Nucleophile. L-glutamine contacts are provided by Leu247, Gln250, Asn288, Gly290, and Tyr291. Catalysis depends on residues His331 and Glu333.

The protein belongs to the CarA family. In terms of assembly, composed of two chains; the small (or glutamine) chain promotes the hydrolysis of glutamine to ammonia, which is used by the large (or ammonia) chain to synthesize carbamoyl phosphate. Tetramer of heterodimers (alpha,beta)4.

The enzyme catalyses hydrogencarbonate + L-glutamine + 2 ATP + H2O = carbamoyl phosphate + L-glutamate + 2 ADP + phosphate + 2 H(+). It carries out the reaction L-glutamine + H2O = L-glutamate + NH4(+). It participates in pyrimidine metabolism; UMP biosynthesis via de novo pathway; (S)-dihydroorotate from bicarbonate: step 1/3. In terms of biological role, small subunit of the glutamine-dependent carbamoyl phosphate synthetase (CPSase). CPSase catalyzes the formation of carbamoyl phosphate from the ammonia moiety of glutamine, carbonate, and phosphate donated by ATP, constituting the first step of the biosynthetic pathway leading to pyrimidine nucleotides. The small subunit (glutamine amidotransferase) binds and cleaves glutamine to supply the large subunit with the substrate ammonia. In Halalkalibacterium halodurans (strain ATCC BAA-125 / DSM 18197 / FERM 7344 / JCM 9153 / C-125) (Bacillus halodurans), this protein is Carbamoyl phosphate synthase pyrimidine-specific small chain.